A 325-amino-acid polypeptide reads, in one-letter code: Cytochrome c1, heme protein, mitochondrial (325 aa).

Residues 1–84 constitute a mitochondrion transit peptide; sequence MAAAAASLRG…AMALHSAVSA (84 aa). The Mitochondrial intermembrane segment spans residues 85–281; sequence SDLELHPPSY…TFLRWASEPE (197 aa). Positions 108-209 constitute a Cytochrome c domain; it reads TSIRRGFQVY…IVRARHGGED (102 aa). Residues Cys-121, Cys-124, and His-125 each coordinate heme c. Ser-182 carries the phosphoserine modification. Met-244 lines the heme c pocket. A helical membrane pass occupies residues 282-315; sequence HDHRKRMGLKMLMMMALLVPLVYTIKRHKWSVLK. Residues 316–325 are Mitochondrial matrix-facing; it reads SRKLAYRPPK.

It belongs to the cytochrome c family. In terms of assembly, component of the ubiquinol-cytochrome c oxidoreductase (cytochrome b-c1 complex, complex III, CIII), a multisubunit enzyme composed of 11 subunits. The complex is composed of 3 respiratory subunits cytochrome b, cytochrome c1 and Rieske protein UQCRFS1, 2 core protein subunits UQCRC1/QCR1 and UQCRC2/QCR2, and 6 low-molecular weight protein subunits UQCRH/QCR6, UQCRB/QCR7, UQCRQ/QCR8, UQCR10/QCR9, UQCR11/QCR10 and subunit 9, the cleavage product of Rieske protein UQCRFS1. The complex exists as an obligatory dimer and forms supercomplexes (SCs) in the inner mitochondrial membrane with NADH-ubiquinone oxidoreductase (complex I, CI) and cytochrome c oxidase (complex IV, CIV), resulting in different assemblies (supercomplex SCI(1)III(2)IV(1) and megacomplex MCI(2)III(2)IV(2)). Interacts with FLVCR2; this interaction occurs in the absence of heme and is disrupted upon heme binding. The cofactor is heme c.

The protein resides in the mitochondrion inner membrane. It catalyses the reaction a quinol + 2 Fe(III)-[cytochrome c](out) = a quinone + 2 Fe(II)-[cytochrome c](out) + 2 H(+)(out). Functionally, component of the ubiquinol-cytochrome c oxidoreductase, a multisubunit transmembrane complex that is part of the mitochondrial electron transport chain which drives oxidative phosphorylation. The respiratory chain contains 3 multisubunit complexes succinate dehydrogenase (complex II, CII), ubiquinol-cytochrome c oxidoreductase (cytochrome b-c1 complex, complex III, CIII) and cytochrome c oxidase (complex IV, CIV), that cooperate to transfer electrons derived from NADH and succinate to molecular oxygen, creating an electrochemical gradient over the inner membrane that drives transmembrane transport and the ATP synthase. The cytochrome b-c1 complex catalyzes electron transfer from ubiquinol to cytochrome c, linking this redox reaction to translocation of protons across the mitochondrial inner membrane, with protons being carried across the membrane as hydrogens on the quinol. In the process called Q cycle, 2 protons are consumed from the matrix, 4 protons are released into the intermembrane space and 2 electrons are passed to cytochrome c. Cytochrome c1 is a catalytic core subunit containing a c-type heme. It transfers electrons from the [2Fe-2S] iron-sulfur cluster of the Rieske protein to cytochrome c. This chain is Cytochrome c1, heme protein, mitochondrial (CYC1), found in Homo sapiens (Human).